The chain runs to 198 residues: Imidazoleglycerol-phosphate dehydratase (198 aa).

The protein belongs to the imidazoleglycerol-phosphate dehydratase family.

The protein resides in the cytoplasm. It catalyses the reaction D-erythro-1-(imidazol-4-yl)glycerol 3-phosphate = 3-(imidazol-4-yl)-2-oxopropyl phosphate + H2O. The protein operates within amino-acid biosynthesis; L-histidine biosynthesis; L-histidine from 5-phospho-alpha-D-ribose 1-diphosphate: step 6/9. This Janthinobacterium sp. (strain Marseille) (Minibacterium massiliensis) protein is Imidazoleglycerol-phosphate dehydratase.